The chain runs to 330 residues: Probable aldo-keto reductase 6 (330 aa).

Tyr-64 (proton donor) is an active-site residue. His-132 provides a ligand contact to substrate. Position 211 to 221 (211 to 221 (SPLGRGFLGLP)) interacts with NADP(+).

This sequence belongs to the aldo/keto reductase family.

The sequence is that of Probable aldo-keto reductase 6 from Arabidopsis thaliana (Mouse-ear cress).